A 262-amino-acid chain; its full sequence is VPS74-like protein DDB_G0288371 (262 aa).

The protein belongs to the GOLPH3/VPS74 family.

Its subcellular location is the golgi apparatus. It localises to the golgi stack membrane. Its function is as follows. Phosphatidylinositol-4-phosphate-binding protein that links Golgi membranes to the cytoskeleton and may participate in the tensile force required for vesicle budding from the Golgi. Thereby, may play a role in Golgi membrane trafficking. May also bind to the coatomer to regulate Golgi membrane trafficking. May play a role in anterograde transport from the Golgi to the plasma membrane and regulate secretion. May be involved in vacuolar protein sorting. The sequence is that of VPS74-like protein DDB_G0288371 from Dictyostelium discoideum (Social amoeba).